The chain runs to 388 residues: Chorismate synthase (388 aa).

NADP(+) contacts are provided by R39 and R45. Residues 130–132, 251–252, G296, 311–315, and R337 contribute to the FMN site; these read RSS, NA, and KPIPT.

It belongs to the chorismate synthase family. Homotetramer. Requires FMNH2 as cofactor.

The enzyme catalyses 5-O-(1-carboxyvinyl)-3-phosphoshikimate = chorismate + phosphate. It functions in the pathway metabolic intermediate biosynthesis; chorismate biosynthesis; chorismate from D-erythrose 4-phosphate and phosphoenolpyruvate: step 7/7. Catalyzes the anti-1,4-elimination of the C-3 phosphate and the C-6 proR hydrogen from 5-enolpyruvylshikimate-3-phosphate (EPSP) to yield chorismate, which is the branch point compound that serves as the starting substrate for the three terminal pathways of aromatic amino acid biosynthesis. This reaction introduces a second double bond into the aromatic ring system. This Lactococcus lactis subsp. cremoris (strain MG1363) protein is Chorismate synthase.